The sequence spans 95 residues: Aspartyl/glutamyl-tRNA(Asn/Gln) amidotransferase subunit C (95 aa).

Belongs to the GatC family. In terms of assembly, heterotrimer of A, B and C subunits.

It catalyses the reaction L-glutamyl-tRNA(Gln) + L-glutamine + ATP + H2O = L-glutaminyl-tRNA(Gln) + L-glutamate + ADP + phosphate + H(+). The enzyme catalyses L-aspartyl-tRNA(Asn) + L-glutamine + ATP + H2O = L-asparaginyl-tRNA(Asn) + L-glutamate + ADP + phosphate + 2 H(+). Its function is as follows. Allows the formation of correctly charged Asn-tRNA(Asn) or Gln-tRNA(Gln) through the transamidation of misacylated Asp-tRNA(Asn) or Glu-tRNA(Gln) in organisms which lack either or both of asparaginyl-tRNA or glutaminyl-tRNA synthetases. The reaction takes place in the presence of glutamine and ATP through an activated phospho-Asp-tRNA(Asn) or phospho-Glu-tRNA(Gln). This Bradyrhizobium sp. (strain BTAi1 / ATCC BAA-1182) protein is Aspartyl/glutamyl-tRNA(Asn/Gln) amidotransferase subunit C.